Here is a 329-residue protein sequence, read N- to C-terminus: Cuticle collagen 6 (329 aa).

Triple-helical region stretches follow at residues 142–171 (GAAG…NGRD), 189–212 (GAPG…PGEP), 216–248 (GKSG…AGRL), 253–279 (GPQG…DGQS), and 282–320 (GPPG…CGHC). The segment at 146 to 329 (PPGPEGPPGN…CPPPRTPPGY (184 aa)) is disordered. Residues 156–173 (DGKDGRNGNDGKNGRDAE) show a composition bias toward basic and acidic residues. Residues 187–199 (PTGAPGPMGAMGP) are compositionally biased toward low complexity. Pro residues predominate over residues 200–212 (KGPPGPKGSPGEP). Positions 251-272 (VPGPQGAPGKPGPIGPPGPKGN) are enriched in pro residues. Over residues 273–282 (PGPDGQSYQG) the composition is skewed to low complexity. Positions 320-329 (CPPPRTPPGY) are enriched in pro residues.

It belongs to the cuticular collagen family. As to quaternary structure, collagen polypeptide chains are complexed within the cuticle by disulfide bonds and other types of covalent cross-links.

In terms of biological role, nematode cuticles are composed largely of collagen-like proteins. The cuticle functions both as an exoskeleton and as a barrier to protect the worm from its environment. In Caenorhabditis elegans, this protein is Cuticle collagen 6.